Reading from the N-terminus, the 605-residue chain is Capsid scaffolding protein (605 aa).

Residues H52, S120, and H139 each act as charge relay system in the active site. The interaction with pAP stretch occupies residues 326–344; that stretch reads GEFVLIPTAYYSQLLTGQT. The tract at residues 585–605 is interaction with major capsid protein; the sequence is IQGSTADDADMFANQMMVGRC.

Belongs to the herpesviridae capsid scaffolding protein family. Homomultimer. Interacts with major capsid protein. As to quaternary structure, exists in a monomer-dimer equilibrium with the dimer being the active species. Capsid scaffolding protein is cleaved by assemblin after formation of the spherical procapsid. As a result, the capsid obtains its mature, icosahedral shape. Cleavages occur at two or more sites: release (R-site) and maturation (M-site).

The protein resides in the host cytoplasm. It is found in the host nucleus. It carries out the reaction Cleaves -Ala-|-Ser- and -Ala-|-Ala- bonds in the scaffold protein.. Its function is as follows. Acts as a scaffold protein by binding major capsid protein in the cytoplasm, inducing the nuclear localization of both proteins. Multimerizes in the nucleus such as major capsid protein forms the icosahedral T=16 capsid. Autocatalytic cleavage releases the assembly protein, and subsequently abolishes interaction with major capsid protein. Cleavages products are evicted from the capsid before or during DNA packaging. Functionally, protease that plays an essential role in virion assembly within the nucleus. Catalyzes the cleavage of the assembly protein after formation of the spherical procapsid. By that cleavage, the capsid matures and gains its icosahedral shape. The cleavage sites seem to include -Ala-Ser-, -Ala-Ala-, as well as Ala-Thr bonds. Assemblin and cleavages products are evicted from the capsid before or during DNA packaging. In terms of biological role, plays a major role in capsid assembly. Acts as a scaffold protein by binding major capsid protein. Multimerizes in the nucleus such as major capsid protein forms the icosahedral T=16 capsid. Cleaved by assemblin after capsid completion. The cleavages products are evicted from the capsid before or during DNA packaging. The sequence is that of Capsid scaffolding protein (33) from Varicella-zoster virus (strain Dumas) (HHV-3).